We begin with the raw amino-acid sequence, 905 residues long: Isoleucine--tRNA ligase (905 aa).

The 'HIGH' region signature appears at 56–66 (PYANGNIHMGT). Glu563 is an L-isoleucyl-5'-AMP binding site. Positions 604 to 608 (KMSKS) match the 'KMSKS' region motif. Lys607 serves as a coordination point for ATP.

The protein belongs to the class-I aminoacyl-tRNA synthetase family. IleS type 1 subfamily. Monomer.

The protein localises to the cytoplasm. It catalyses the reaction tRNA(Ile) + L-isoleucine + ATP = L-isoleucyl-tRNA(Ile) + AMP + diphosphate. In terms of biological role, catalyzes the attachment of isoleucine to tRNA(Ile). As IleRS can inadvertently accommodate and process structurally similar amino acids such as valine, to avoid such errors it has two additional distinct tRNA(Ile)-dependent editing activities. One activity is designated as 'pretransfer' editing and involves the hydrolysis of activated Val-AMP. The other activity is designated 'posttransfer' editing and involves deacylation of mischarged Val-tRNA(Ile). This Pelagibacter ubique (strain HTCC1062) protein is Isoleucine--tRNA ligase.